We begin with the raw amino-acid sequence, 366 residues long: tRNA/tmRNA (uracil-C(5))-methyltransferase (366 aa).

Positions 190, 218, 223, 239, and 299 each coordinate S-adenosyl-L-methionine. Cys324 functions as the Nucleophile in the catalytic mechanism. Glu358 acts as the Proton acceptor in catalysis.

The protein belongs to the class I-like SAM-binding methyltransferase superfamily. RNA M5U methyltransferase family. TrmA subfamily.

The catalysed reaction is uridine(54) in tRNA + S-adenosyl-L-methionine = 5-methyluridine(54) in tRNA + S-adenosyl-L-homocysteine + H(+). The enzyme catalyses uridine(341) in tmRNA + S-adenosyl-L-methionine = 5-methyluridine(341) in tmRNA + S-adenosyl-L-homocysteine + H(+). Its function is as follows. Dual-specificity methyltransferase that catalyzes the formation of 5-methyluridine at position 54 (m5U54) in all tRNAs, and that of position 341 (m5U341) in tmRNA (transfer-mRNA). The sequence is that of tRNA/tmRNA (uracil-C(5))-methyltransferase from Escherichia coli O127:H6 (strain E2348/69 / EPEC).